The primary structure comprises 129 residues: Fluoride-specific ion channel FluC 2 (129 aa).

A helical membrane pass occupies residues 19 to 39 (GLGLVVPAAAVGGFPLGTLFI). Residues G74 and T77 each coordinate Na(+). Residues 95-115 (FGMAAVYIAASLFGGLLASWA) form a helical membrane-spanning segment.

It belongs to the fluoride channel Fluc/FEX (TC 1.A.43) family.

It is found in the cell membrane. It carries out the reaction fluoride(in) = fluoride(out). Its activity is regulated as follows. Na(+) is not transported, but it plays an essential structural role and its presence is essential for fluoride channel function. Its function is as follows. Fluoride-specific ion channel. Important for reducing fluoride concentration in the cell, thus reducing its toxicity. The chain is Fluoride-specific ion channel FluC 2 from Geobacillus kaustophilus (strain HTA426).